A 96-amino-acid chain; its full sequence is Small ribosomal subunit protein uS19 (96 aa).

This sequence belongs to the universal ribosomal protein uS19 family.

Protein S19 forms a complex with S13 that binds strongly to the 16S ribosomal RNA. This Gemmatimonas aurantiaca (strain DSM 14586 / JCM 11422 / NBRC 100505 / T-27) protein is Small ribosomal subunit protein uS19.